Consider the following 124-residue polypeptide: MTGEGYKQAIVVRRDLGMGRGKAAAQAAHASCEAVFLILESGRPEWRRWLEMWRLQGQAKVVLRVESLAELQEVYSKAVEEGLPASFVRDAGKTQLEPGTPTAAAVGPAPSRLVDRITGGLKLF.

This sequence belongs to the PTH2 family.

Its subcellular location is the cytoplasm. The catalysed reaction is an N-acyl-L-alpha-aminoacyl-tRNA + H2O = an N-acyl-L-amino acid + a tRNA + H(+). In terms of biological role, the natural substrate for this enzyme may be peptidyl-tRNAs which drop off the ribosome during protein synthesis. The sequence is that of Peptidyl-tRNA hydrolase from Aeropyrum pernix (strain ATCC 700893 / DSM 11879 / JCM 9820 / NBRC 100138 / K1).